The sequence spans 94 residues: Pyrimidine/purine nucleoside phosphorylase (94 aa).

The protein belongs to the nucleoside phosphorylase PpnP family.

The enzyme catalyses a purine D-ribonucleoside + phosphate = a purine nucleobase + alpha-D-ribose 1-phosphate. The catalysed reaction is adenosine + phosphate = alpha-D-ribose 1-phosphate + adenine. It catalyses the reaction cytidine + phosphate = cytosine + alpha-D-ribose 1-phosphate. It carries out the reaction guanosine + phosphate = alpha-D-ribose 1-phosphate + guanine. The enzyme catalyses inosine + phosphate = alpha-D-ribose 1-phosphate + hypoxanthine. The catalysed reaction is thymidine + phosphate = 2-deoxy-alpha-D-ribose 1-phosphate + thymine. It catalyses the reaction uridine + phosphate = alpha-D-ribose 1-phosphate + uracil. It carries out the reaction xanthosine + phosphate = alpha-D-ribose 1-phosphate + xanthine. In terms of biological role, catalyzes the phosphorolysis of diverse nucleosides, yielding D-ribose 1-phosphate and the respective free bases. Can use uridine, adenosine, guanosine, cytidine, thymidine, inosine and xanthosine as substrates. Also catalyzes the reverse reactions. This chain is Pyrimidine/purine nucleoside phosphorylase, found in Cronobacter sakazakii (strain ATCC BAA-894) (Enterobacter sakazakii).